Reading from the N-terminus, the 206-residue chain is Ribosomal RNA large subunit methyltransferase E (206 aa).

The S-adenosyl-L-methionine site is built by Gly60, Trp62, Asp80, Asp96, and Asp121. Lys161 serves as the catalytic Proton acceptor.

The protein belongs to the class I-like SAM-binding methyltransferase superfamily. RNA methyltransferase RlmE family.

It is found in the cytoplasm. The enzyme catalyses uridine(2552) in 23S rRNA + S-adenosyl-L-methionine = 2'-O-methyluridine(2552) in 23S rRNA + S-adenosyl-L-homocysteine + H(+). Its function is as follows. Specifically methylates the uridine in position 2552 of 23S rRNA at the 2'-O position of the ribose in the fully assembled 50S ribosomal subunit. In Francisella tularensis subsp. novicida (strain U112), this protein is Ribosomal RNA large subunit methyltransferase E.